A 201-amino-acid polypeptide reads, in one-letter code: Small ribosomal subunit protein uS4c (201 aa).

Residues 20–43 (GLTSKRPRAGSDLRNQSRSGKRSQ) form a disordered region. The S4 RNA-binding domain maps to 89 to 149 (MRLDNILFRL…NEQKSRALIQ (61 aa)).

It belongs to the universal ribosomal protein uS4 family. In terms of assembly, part of the 30S ribosomal subunit. Contacts protein S5. The interaction surface between S4 and S5 is involved in control of translational fidelity.

The protein localises to the plastid. It localises to the chloroplast. Its function is as follows. One of the primary rRNA binding proteins, it binds directly to 16S rRNA where it nucleates assembly of the body of the 30S subunit. Functionally, with S5 and S12 plays an important role in translational accuracy. This chain is Small ribosomal subunit protein uS4c (rps4), found in Vitis vinifera (Grape).